We begin with the raw amino-acid sequence, 370 residues long: Protein Mut11 (370 aa).

The tract at residues 1–22 (MARGPGDTDMDEASADAAIPSS) is disordered. 7 WD repeats span residues 38–77 (GHTK…RVNT), 80–119 (GHSC…CLRT), 122–162 (GHTN…CLRE), 165–204 (AHSD…CLKT), 208–247 (RDSP…TRRT), 262–301 (GFLG…VVGR), and 329–370 (GHTA…PAAA).

It belongs to the WD repeat WDR5/wds family.

It is found in the nucleus. Functionally, part of a complex involved in 'Lys-4' histone H3 methylation. The polypeptide is Protein Mut11 (Mut11) (Chlamydomonas reinhardtii (Chlamydomonas smithii)).